Reading from the N-terminus, the 230-residue chain is Orotidine 5'-phosphate decarboxylase (230 aa).

Residues Asp-8, Lys-30, 59-68 (DLKLYDIPNT), Thr-118, Arg-178, Gln-187, Gly-207, and Arg-208 contribute to the substrate site. Residue Lys-61 is the Proton donor of the active site.

Belongs to the OMP decarboxylase family. Type 1 subfamily. Homodimer.

The catalysed reaction is orotidine 5'-phosphate + H(+) = UMP + CO2. It participates in pyrimidine metabolism; UMP biosynthesis via de novo pathway; UMP from orotate: step 2/2. In terms of biological role, catalyzes the decarboxylation of orotidine 5'-monophosphate (OMP) to uridine 5'-monophosphate (UMP). The protein is Orotidine 5'-phosphate decarboxylase of Sulfurovum sp. (strain NBC37-1).